We begin with the raw amino-acid sequence, 54 residues long: UPF0391 membrane protein Aave_3864 (54 aa).

A run of 2 helical transmembrane segments spans residues 5-25 and 28-48; these read AVVFLVIALIAALFGFGGIAA and VGIAKILFFVFVIMAVVTFVL.

This sequence belongs to the UPF0391 family.

The protein localises to the cell membrane. In Paracidovorax citrulli (strain AAC00-1) (Acidovorax citrulli), this protein is UPF0391 membrane protein Aave_3864.